We begin with the raw amino-acid sequence, 365 residues long: Chorismate synthase (365 aa).

NADP(+) contacts are provided by arginine 48 and arginine 54. FMN is bound by residues 125-127 (RAS), 237-238 (NA), glycine 277, 292-296 (KPTSS), and arginine 318.

Belongs to the chorismate synthase family. As to quaternary structure, homotetramer. FMNH2 is required as a cofactor.

It carries out the reaction 5-O-(1-carboxyvinyl)-3-phosphoshikimate = chorismate + phosphate. Its pathway is metabolic intermediate biosynthesis; chorismate biosynthesis; chorismate from D-erythrose 4-phosphate and phosphoenolpyruvate: step 7/7. Its function is as follows. Catalyzes the anti-1,4-elimination of the C-3 phosphate and the C-6 proR hydrogen from 5-enolpyruvylshikimate-3-phosphate (EPSP) to yield chorismate, which is the branch point compound that serves as the starting substrate for the three terminal pathways of aromatic amino acid biosynthesis. This reaction introduces a second double bond into the aromatic ring system. In Polaromonas sp. (strain JS666 / ATCC BAA-500), this protein is Chorismate synthase.